The sequence spans 644 residues: 3D-(3,5/4)-trihydroxycyclohexane-1,2-dione hydrolase 2 (644 aa).

Glutamate 65 is a binding site for thiamine diphosphate. Residues 442-522 (SLPGDLQRMW…INVLLFDNSG (81 aa)) form a thiamine pyrophosphate binding region. Mg(2+) contacts are provided by aspartate 493 and asparagine 520.

This sequence belongs to the TPP enzyme family. Requires Mg(2+) as cofactor. Thiamine diphosphate is required as a cofactor.

It catalyses the reaction 3D-3,5/4-trihydroxycyclohexane-1,2-dione + H2O = 5-deoxy-D-glucuronate + H(+). It participates in polyol metabolism; myo-inositol degradation into acetyl-CoA; acetyl-CoA from myo-inositol: step 3/7. Functionally, involved in the cleavage of the C1-C2 bond of 3D-(3,5/4)-trihydroxycyclohexane-1,2-dione (THcHDO) to yield 5-deoxy-glucuronate (5DG). This chain is 3D-(3,5/4)-trihydroxycyclohexane-1,2-dione hydrolase 2, found in Bacillus cereus (strain ZK / E33L).